Reading from the N-terminus, the 425-residue chain is Glutamate-1-semialdehyde 2,1-aminomutase (425 aa).

K265 carries the N6-(pyridoxal phosphate)lysine modification.

Belongs to the class-III pyridoxal-phosphate-dependent aminotransferase family. HemL subfamily. Homodimer. The cofactor is pyridoxal 5'-phosphate.

Its subcellular location is the cytoplasm. The enzyme catalyses (S)-4-amino-5-oxopentanoate = 5-aminolevulinate. The protein operates within porphyrin-containing compound metabolism; protoporphyrin-IX biosynthesis; 5-aminolevulinate from L-glutamyl-tRNA(Glu): step 2/2. This Clostridium perfringens (strain ATCC 13124 / DSM 756 / JCM 1290 / NCIMB 6125 / NCTC 8237 / Type A) protein is Glutamate-1-semialdehyde 2,1-aminomutase.